We begin with the raw amino-acid sequence, 314 residues long: Glutathione synthetase (314 aa).

The ATP-grasp domain occupies glutamate 125–glutamate 311. ATP is bound at residue phenylalanine 151 to glycine 208. Residues glutamate 282 and asparagine 284 each contribute to the Mg(2+) site.

Belongs to the prokaryotic GSH synthase family. Mg(2+) serves as cofactor. Requires Mn(2+) as cofactor.

It catalyses the reaction gamma-L-glutamyl-L-cysteine + glycine + ATP = glutathione + ADP + phosphate + H(+). It participates in sulfur metabolism; glutathione biosynthesis; glutathione from L-cysteine and L-glutamate: step 2/2. In Xylella fastidiosa (strain Temecula1 / ATCC 700964), this protein is Glutathione synthetase.